The primary structure comprises 292 residues: tRNA-cytidine(32) 2-sulfurtransferase (292 aa).

The PP-loop motif motif lies at 62–67; the sequence is SGGKDS. [4Fe-4S] cluster-binding residues include cysteine 137, cysteine 140, and cysteine 228.

The protein belongs to the TtcA family. In terms of assembly, homodimer. The cofactor is Mg(2+). Requires [4Fe-4S] cluster as cofactor.

The protein localises to the cytoplasm. It catalyses the reaction cytidine(32) in tRNA + S-sulfanyl-L-cysteinyl-[cysteine desulfurase] + AH2 + ATP = 2-thiocytidine(32) in tRNA + L-cysteinyl-[cysteine desulfurase] + A + AMP + diphosphate + H(+). It participates in tRNA modification. Its function is as follows. Catalyzes the ATP-dependent 2-thiolation of cytidine in position 32 of tRNA, to form 2-thiocytidine (s(2)C32). The sulfur atoms are provided by the cysteine/cysteine desulfurase (IscS) system. The sequence is that of tRNA-cytidine(32) 2-sulfurtransferase from Brucella anthropi (strain ATCC 49188 / DSM 6882 / CCUG 24695 / JCM 21032 / LMG 3331 / NBRC 15819 / NCTC 12168 / Alc 37) (Ochrobactrum anthropi).